The chain runs to 109 residues: Sperm-specific class P protein 10 (109 aa).

In terms of domain architecture, MSP spans 2 to 109; the sequence is SLTADPPACT…TVTIPMSATA (108 aa).

Expressed at higher level in testis.

The sequence is that of Sperm-specific class P protein 10 (ssp-10) from Caenorhabditis elegans.